A 456-amino-acid polypeptide reads, in one-letter code: Sulfate adenylyltransferase (456 aa).

Belongs to the sulfate adenylyltransferase family.

It catalyses the reaction sulfate + ATP + H(+) = adenosine 5'-phosphosulfate + diphosphate. Its pathway is sulfur metabolism; hydrogen sulfide biosynthesis; sulfite from sulfate: step 1/3. This chain is Sulfate adenylyltransferase (sat), found in Archaeoglobus fulgidus (strain ATCC 49558 / DSM 4304 / JCM 9628 / NBRC 100126 / VC-16).